The following is a 91-amino-acid chain: Small ribosomal subunit protein bS18 (91 aa).

Belongs to the bacterial ribosomal protein bS18 family. As to quaternary structure, part of the 30S ribosomal subunit. Forms a tight heterodimer with protein bS6.

In terms of biological role, binds as a heterodimer with protein bS6 to the central domain of the 16S rRNA, where it helps stabilize the platform of the 30S subunit. In Burkholderia vietnamiensis (strain G4 / LMG 22486) (Burkholderia cepacia (strain R1808)), this protein is Small ribosomal subunit protein bS18.